A 93-amino-acid polypeptide reads, in one-letter code: Early nodulin-36B (93 aa).

This is Early nodulin-36B from Glycine max (Soybean).